Consider the following 256-residue polypeptide: Small ribosomal subunit protein uS2 (256 aa).

A coiled-coil region spans residues Asn-104–Leu-149.

Belongs to the universal ribosomal protein uS2 family. In terms of assembly, part of the 30S ribosomal subunit. Contacts protein S8.

Its function is as follows. Spans the head-body hinge region of the 30S subunit. Is loosely associated with the 30S subunit. The polypeptide is Small ribosomal subunit protein uS2 (rpsB) (Thermus thermophilus (strain ATCC BAA-163 / DSM 7039 / HB27)).